Here is a 172-residue protein sequence, read N- to C-terminus: B-box zinc finger protein 18 (172 aa).

Zn(2+) is bound by residues C5, C8, C28, H33, C56, C59, C79, and H84. The B box-type 1; atypical zinc-finger motif lies at 5-47 (CDACESAAAIVFCAADEAALCCSCDEKVHKCNKLASRHLRVGL). The B box-type 2; atypical zinc finger occupies 56-96 (CDICENAPAFFYCEIDGSSLCLQCDMVVHVGGKRTHRRFLL). Residues 119–172 (QKASSGRGQESNGNGDHDHNMIDLNSNPQRVHEPGSHNQEEGIDVNNANNHEHE) are disordered. Polar residues predominate over residues 120–132 (KASSGRGQESNGN). Positions 148–158 (RVHEPGSHNQE) are enriched in basic and acidic residues.

As to expression, expressed in vasculature of leaves and petioles.

The protein localises to the nucleus. Functionally, acts as a negative regulator of seedling photomorphogenesis. Acts as a negative regulator of blue light-mediated inhibition of hypocotyl elongation through increase of bioactive gibberellin levels. Acts as a repressor of thermotolerance by modulating expression of a set of heat shock-responsive genes. The sequence is that of B-box zinc finger protein 18 from Arabidopsis thaliana (Mouse-ear cress).